Here is a 338-residue protein sequence, read N- to C-terminus: Holliday junction branch migration complex subunit RuvB (338 aa).

The disordered stretch occupies residues 1 to 22 (MVDDERVVSPETADDHEDSVEK). The interval 4–185 (DERVVSPETA…FGIVEHMAYY (182 aa)) is large ATPase domain (RuvB-L). Residues L24, R25, G66, K69, T70, T71, 132–134 (EDF), R175, Y185, and R222 contribute to the ATP site. T70 contributes to the Mg(2+) binding site. Residues 186-257 (ETTDLQEIVL…IVDHALDLLR (72 aa)) form a small ATPAse domain (RuvB-S) region. Residues 260–338 (SAGLDATDIK…HLGRTMPDNN (79 aa)) form a head domain (RuvB-H) region. DNA contacts are provided by R315 and R320.

It belongs to the RuvB family. Homohexamer. Forms an RuvA(8)-RuvB(12)-Holliday junction (HJ) complex. HJ DNA is sandwiched between 2 RuvA tetramers; dsDNA enters through RuvA and exits via RuvB. An RuvB hexamer assembles on each DNA strand where it exits the tetramer. Each RuvB hexamer is contacted by two RuvA subunits (via domain III) on 2 adjacent RuvB subunits; this complex drives branch migration. In the full resolvosome a probable DNA-RuvA(4)-RuvB(12)-RuvC(2) complex forms which resolves the HJ.

It is found in the cytoplasm. The catalysed reaction is ATP + H2O = ADP + phosphate + H(+). Functionally, the RuvA-RuvB-RuvC complex processes Holliday junction (HJ) DNA during genetic recombination and DNA repair, while the RuvA-RuvB complex plays an important role in the rescue of blocked DNA replication forks via replication fork reversal (RFR). RuvA specifically binds to HJ cruciform DNA, conferring on it an open structure. The RuvB hexamer acts as an ATP-dependent pump, pulling dsDNA into and through the RuvAB complex. RuvB forms 2 homohexamers on either side of HJ DNA bound by 1 or 2 RuvA tetramers; 4 subunits per hexamer contact DNA at a time. Coordinated motions by a converter formed by DNA-disengaged RuvB subunits stimulates ATP hydrolysis and nucleotide exchange. Immobilization of the converter enables RuvB to convert the ATP-contained energy into a lever motion, pulling 2 nucleotides of DNA out of the RuvA tetramer per ATP hydrolyzed, thus driving DNA branch migration. The RuvB motors rotate together with the DNA substrate, which together with the progressing nucleotide cycle form the mechanistic basis for DNA recombination by continuous HJ branch migration. Branch migration allows RuvC to scan DNA until it finds its consensus sequence, where it cleaves and resolves cruciform DNA. The polypeptide is Holliday junction branch migration complex subunit RuvB (Levilactobacillus brevis (strain ATCC 367 / BCRC 12310 / CIP 105137 / JCM 1170 / LMG 11437 / NCIMB 947 / NCTC 947) (Lactobacillus brevis)).